The sequence spans 254 residues: 3-deoxy-manno-octulosonate cytidylyltransferase (254 aa).

The protein belongs to the KdsB family.

It localises to the cytoplasm. The catalysed reaction is 3-deoxy-alpha-D-manno-oct-2-ulosonate + CTP = CMP-3-deoxy-beta-D-manno-octulosonate + diphosphate. It functions in the pathway nucleotide-sugar biosynthesis; CMP-3-deoxy-D-manno-octulosonate biosynthesis; CMP-3-deoxy-D-manno-octulosonate from 3-deoxy-D-manno-octulosonate and CTP: step 1/1. It participates in bacterial outer membrane biogenesis; lipopolysaccharide biosynthesis. Activates KDO (a required 8-carbon sugar) for incorporation into bacterial lipopolysaccharide in Gram-negative bacteria. In Pseudomonas paraeruginosa (strain DSM 24068 / PA7) (Pseudomonas aeruginosa (strain PA7)), this protein is 3-deoxy-manno-octulosonate cytidylyltransferase.